A 202-amino-acid chain; its full sequence is N-(5'-phosphoribosyl)anthranilate isomerase (202 aa).

The protein belongs to the TrpF family.

The catalysed reaction is N-(5-phospho-beta-D-ribosyl)anthranilate = 1-(2-carboxyphenylamino)-1-deoxy-D-ribulose 5-phosphate. It functions in the pathway amino-acid biosynthesis; L-tryptophan biosynthesis; L-tryptophan from chorismate: step 3/5. The chain is N-(5'-phosphoribosyl)anthranilate isomerase from Listeria monocytogenes serotype 4b (strain CLIP80459).